The primary structure comprises 432 residues: Luc7-like protein 3 (432 aa).

Position 1 is an N-acetylmethionine (M1). A phosphoserine mark is found at S3, S110, and S115. Residues 124 to 181 adopt a coiled-coil conformation; it reads KNEEKIQVLTDKIDVLLQQIEELGSEGKVEEAQGMMKLVEQLKEERELLRSTTSTIES. K231 carries the post-translational modification N6-acetyllysine. Positions 234-287 are enriched in basic and acidic residues; it reads LRKRTEEPDRDERLKKEKQEREEREKEREREREERERKRRREEEEREKERARDR. The tract at residues 234–432 is disordered; the sequence is LRKRTEEPDR…IKSEGDTQSN (199 aa). The span at 288–301 shows a compositional bias: basic residues; sequence ERRKRSRSRSRHSS. The segment covering 302-311 has biased composition (basic and acidic residues); that stretch reads RTSDRRCSRS. Residues 312 to 367 show a composition bias toward basic residues; it reads RDHKRSRSRERRRSRSRDRRRSRSHDRSERKHRSRSRDRRRSKSRDRKSYKHRSKS. Residues 368-414 are compositionally biased toward basic and acidic residues; sequence RDREQDRKSKEKEKRGSDDKKSSVKSGSREKQSEDTNTESKESDTKN. Position 420 is a phosphoserine (S420). Residues 421 to 432 show a composition bias toward basic and acidic residues; the sequence is EDIKSEGDTQSN. K424 participates in a covalent cross-link: Glycyl lysine isopeptide (Lys-Gly) (interchain with G-Cter in SUMO1); alternate. K424 is covalently cross-linked (Glycyl lysine isopeptide (Lys-Gly) (interchain with G-Cter in SUMO2); alternate). Phosphoserine is present on residues S425 and S431.

The protein belongs to the Luc7 family. May interact with SFRS1 and form homodimers. Interacts with JMJD6. Interacts with RBM25. Interacts with RSRC1 (via Arg/Ser-rich domain). Interacts with RRP1B. In terms of processing, phosphorylated in vitro by SRPK1, SRPK2 and CLK1. As to expression, widely expressed. Highest levels in heart, brain, pancreas, thymus, ovary, small intestine and peripheral blood leukocytes, as well as cerebellum, putamen and pituitary gland. Lowest levels in lung, liver and kidney. Also expressed in fetal tissues, including brain, heart, kidney, thymus and lung.

It localises to the nucleus speckle. Its function is as follows. Binds cAMP regulatory element DNA sequence. May play a role in RNA splicing. This is Luc7-like protein 3 (LUC7L3) from Homo sapiens (Human).